The primary structure comprises 230 residues: Urease accessory protein UreF (230 aa).

This sequence belongs to the UreF family. As to quaternary structure, ureD, UreF and UreG form a complex that acts as a GTP-hydrolysis-dependent molecular chaperone, activating the urease apoprotein by helping to assemble the nickel containing metallocenter of UreC. The UreE protein probably delivers the nickel.

It localises to the cytoplasm. Its function is as follows. Required for maturation of urease via the functional incorporation of the urease nickel metallocenter. The protein is Urease accessory protein UreF of Chromohalobacter salexigens (strain ATCC BAA-138 / DSM 3043 / CIP 106854 / NCIMB 13768 / 1H11).